The following is a 421-amino-acid chain: Tyrosine--tRNA ligase (421 aa).

Y38 lines the L-tyrosine pocket. The 'HIGH' region signature appears at 43-52; sequence PTGDSLHIGH. L-tyrosine contacts are provided by Y169 and Q173. Residues 231–235 carry the 'KMSKS' region motif; that stretch reads KFGKS. Residue K234 participates in ATP binding. Residues 353–419 enclose the S4 RNA-binding domain; that stretch reads KNLVDFLVDT…GKKKYTLVHI (67 aa).

Belongs to the class-I aminoacyl-tRNA synthetase family. TyrS type 1 subfamily. Homodimer.

It is found in the cytoplasm. The enzyme catalyses tRNA(Tyr) + L-tyrosine + ATP = L-tyrosyl-tRNA(Tyr) + AMP + diphosphate + H(+). In terms of biological role, catalyzes the attachment of tyrosine to tRNA(Tyr) in a two-step reaction: tyrosine is first activated by ATP to form Tyr-AMP and then transferred to the acceptor end of tRNA(Tyr). This is Tyrosine--tRNA ligase from Lactobacillus delbrueckii subsp. bulgaricus (strain ATCC BAA-365 / Lb-18).